The chain runs to 255 residues: Small ribosomal subunit protein uS2 (255 aa).

A disordered region spans residues 232-255 (ASGRDLGASEEVPVEPALEEASEA).

This sequence belongs to the universal ribosomal protein uS2 family.

The protein is Small ribosomal subunit protein uS2 of Rhizobium meliloti (strain 1021) (Ensifer meliloti).